A 417-amino-acid chain; its full sequence is Phosphoglycerate kinase, cytosolic (417 aa).

V23, D24, F25, N26, R39, S61, H62, G64, R65, R132, H168, and R169 together coordinate (2R)-3-phosphoglycerate. Residues G214 and A215 each contribute to the ADP site. G214 provides a ligand contact to CDP. Residues A215 and K216 each contribute to the AMP site. Residue A215 coordinates ATP. Residue A215 participates in Mg(2+) binding. Position 216 (K216) interacts with (2R)-3-phosphoglycerate. D219 contributes to the CDP binding site. D219 serves as a coordination point for Mg(2+). Residues K220 and G238 each coordinate ADP. Residue K220 participates in AMP binding. K220 contributes to the ATP binding site. G238 lines the CDP pocket. AMP is bound by residues A239 and A311. Residues A239 and A311 each contribute to the ATP site. Residues A311 and N335 each contribute to the ADP site. Positions 336 and 341 each coordinate CDP. Residues F341, E342, D374, and T375 each contribute to the ADP site. Residue E342 participates in AMP binding. ATP is bound by residues E342, D374, and T375. D374 contributes to the Mg(2+) binding site.

This sequence belongs to the phosphoglycerate kinase family. As to quaternary structure, monomer. It depends on Mg(2+) as a cofactor.

The protein resides in the cytoplasm. It carries out the reaction (2R)-3-phosphoglycerate + ATP = (2R)-3-phospho-glyceroyl phosphate + ADP. It participates in carbohydrate degradation; glycolysis; pyruvate from D-glyceraldehyde 3-phosphate: step 2/5. In Crithidia fasciculata, this protein is Phosphoglycerate kinase, cytosolic (PGKB).